The following is a 180-amino-acid chain: Inner membrane-spanning protein YciB (180 aa).

The next 6 helical transmembrane spans lie at 4–24, 25–45, 49–69, 76–96, 118–138, and 150–170; these read FLSE…GGGI, QHAT…CYVI, VSKL…ITLI, IKIK…MSGI, ITLS…NEVV, and FKVF…LPLL.

The protein belongs to the YciB family.

It localises to the cell inner membrane. In terms of biological role, plays a role in cell envelope biogenesis, maintenance of cell envelope integrity and membrane homeostasis. The chain is Inner membrane-spanning protein YciB from Rickettsia rickettsii (strain Iowa).